Reading from the N-terminus, the 417-residue chain is UDP-N-acetylglucosamine 1-carboxyvinyltransferase (417 aa).

Position 22–23 (22–23) interacts with phosphoenolpyruvate; it reads KN. UDP-N-acetyl-alpha-D-glucosamine is bound at residue R91. C115 functions as the Proton donor in the catalytic mechanism. A 2-(S-cysteinyl)pyruvic acid O-phosphothioketal modification is found at C115. UDP-N-acetyl-alpha-D-glucosamine-binding positions include 120-124, D304, and I326; that span reads RPVDQ.

The protein belongs to the EPSP synthase family. MurA subfamily.

The protein resides in the cytoplasm. The catalysed reaction is phosphoenolpyruvate + UDP-N-acetyl-alpha-D-glucosamine = UDP-N-acetyl-3-O-(1-carboxyvinyl)-alpha-D-glucosamine + phosphate. It participates in cell wall biogenesis; peptidoglycan biosynthesis. Its function is as follows. Cell wall formation. Adds enolpyruvyl to UDP-N-acetylglucosamine. The sequence is that of UDP-N-acetylglucosamine 1-carboxyvinyltransferase from Desulfovibrio desulfuricans (strain ATCC 27774 / DSM 6949 / MB).